Here is a 162-residue protein sequence, read N- to C-terminus: Probable chemoreceptor glutamine deamidase CheD (162 aa).

The protein belongs to the CheD family.

It catalyses the reaction L-glutaminyl-[protein] + H2O = L-glutamyl-[protein] + NH4(+). Functionally, probably deamidates glutamine residues to glutamate on methyl-accepting chemotaxis receptors (MCPs), playing an important role in chemotaxis. The sequence is that of Probable chemoreceptor glutamine deamidase CheD from Clostridium kluyveri (strain ATCC 8527 / DSM 555 / NBRC 12016 / NCIMB 10680 / K1).